The primary structure comprises 454 residues: OTU domain-containing protein 1 (454 aa).

Disordered regions lie at residues 36–64 (QSAS…REAA) and 116–257 (LPPP…SRAD). Low complexity predominate over residues 52–64 (RPPAAATEPREAA). Residues 116–125 (LPPPSAPSPP) show a composition bias toward pro residues. 3 stretches are compositionally biased toward basic and acidic residues: residues 151 to 164 (DAPD…EHRQ), 193 to 210 (GEER…RASG), and 219 to 229 (ALRRQDPEAEA). Residues 282–411 (KYRFHIIPDG…NGHYDAVFDH (130 aa)) form the OTU domain. The segment at 287–293 (IIPDGNC) is cys-loop. Residue Asp-290 is part of the active site. The active-site Nucleophile is Cys-293. The his-loop stretch occupies residues 342–352 (AAQDGAWAGYP). Residues 399–404 (WLSNGH) form a variable-loop region. Residue His-404 is part of the active site. Residues 430–449 (KRDEELAKSMAISLSKMYIE) enclose the UIM domain.

The catalysed reaction is Thiol-dependent hydrolysis of ester, thioester, amide, peptide and isopeptide bonds formed by the C-terminal Gly of ubiquitin (a 76-residue protein attached to proteins as an intracellular targeting signal).. Deubiquitinating enzyme that specifically hydrolyzes 'Lys-63'-linked polyubiquitin to monoubiquitin. Required for the stability and translation of a subset mRNAs with a high abundance of rare codons by mediating deubiquitination of 40S ribosomal protein RPS10/eS10, thereby antagonizing ZNF598-mediated 40S ubiquitination. The abundance of rare codons in mRNAs can limit the translation rate and can lead to ribosome collisions that trigger activation of ribosome quality control (RQC) pathway by ZNF598. OTUD1-mediated deubiquitination prevents activation of the RQC and subsequent dissociation of ribosomes and stimulates formation of polysomes and translation. The protein is OTU domain-containing protein 1 (Otud1) of Mus musculus (Mouse).